A 62-amino-acid polypeptide reads, in one-letter code: U10-hottentoxin-Hj2a (62 aa).

The first 22 residues, 1 to 22 (MQKLLIILILFCILKFNVDVEG), serve as a signal peptide directing secretion. Disulfide bonds link Cys-28-Cys-46, Cys-33-Cys-59, and Cys-37-Cys-61.

This sequence belongs to the short scorpion toxin superfamily. Potassium channel inhibitor family. Alpha-KTx 23 subfamily. In terms of tissue distribution, expressed by the venom gland.

It localises to the secreted. In terms of biological role, may block potassium channels. The sequence is that of U10-hottentoxin-Hj2a from Hottentotta judaicus (Black scorpion).